The sequence spans 356 residues: Heat-inducible transcription repressor HrcA (356 aa).

This sequence belongs to the HrcA family.

Its function is as follows. Negative regulator of class I heat shock genes (grpE-dnaK-dnaJ and groELS operons). Prevents heat-shock induction of these operons. The polypeptide is Heat-inducible transcription repressor HrcA (Chelativorans sp. (strain BNC1)).